The sequence spans 332 residues: Biotin synthase (332 aa).

In terms of domain architecture, Radical SAM core spans 53–282 (HFGKKVKLNM…TKEIRISGGR (230 aa)). Residues Cys-71, Cys-75, and Cys-78 each coordinate [4Fe-4S] cluster. [2Fe-2S] cluster-binding residues include Cys-115, Cys-147, Cys-207, and Arg-277.

This sequence belongs to the radical SAM superfamily. Biotin synthase family. Homodimer. [4Fe-4S] cluster is required as a cofactor. It depends on [2Fe-2S] cluster as a cofactor.

The catalysed reaction is (4R,5S)-dethiobiotin + (sulfur carrier)-SH + 2 reduced [2Fe-2S]-[ferredoxin] + 2 S-adenosyl-L-methionine = (sulfur carrier)-H + biotin + 2 5'-deoxyadenosine + 2 L-methionine + 2 oxidized [2Fe-2S]-[ferredoxin]. The protein operates within cofactor biosynthesis; biotin biosynthesis; biotin from 7,8-diaminononanoate: step 2/2. Functionally, catalyzes the conversion of dethiobiotin (DTB) to biotin by the insertion of a sulfur atom into dethiobiotin via a radical-based mechanism. The sequence is that of Biotin synthase from Bacillus cereus (strain G9842).